We begin with the raw amino-acid sequence, 114 residues long: Large ribosomal subunit protein P2 (114 aa).

The span at 76–91 (PAAAAAAGGGDSSSAA) shows a compositional bias: low complexity. A disordered region spans residues 76–114 (PAAAAAAGGGDSSSAAKETKKEEPEEEEEDGDMGLSLFD).

This sequence belongs to the eukaryotic ribosomal protein P1/P2 family. As to quaternary structure, P1 and P2 exist as dimers at the large ribosomal subunit. Phosphorylated.

Its function is as follows. Plays an important role in the elongation step of protein synthesis. This is Large ribosomal subunit protein P2 from Eimeria tenella (Coccidian parasite).